The following is a 211-amino-acid chain: Uridine kinase (211 aa).

An ATP-binding site is contributed by 12–19; that stretch reads GGSGSGKT.

Belongs to the uridine kinase family.

The protein localises to the cytoplasm. It catalyses the reaction uridine + ATP = UMP + ADP + H(+). The catalysed reaction is cytidine + ATP = CMP + ADP + H(+). The protein operates within pyrimidine metabolism; CTP biosynthesis via salvage pathway; CTP from cytidine: step 1/3. It participates in pyrimidine metabolism; UMP biosynthesis via salvage pathway; UMP from uridine: step 1/1. The chain is Uridine kinase from Geobacillus sp. (strain WCH70).